Reading from the N-terminus, the 317-residue chain is Pyridoxal 5'-phosphate synthase subunit PdxS (317 aa).

Aspartate 47 contributes to the D-ribose 5-phosphate binding site. The active-site Schiff-base intermediate with D-ribose 5-phosphate is the lysine 104. Residue glycine 176 coordinates D-ribose 5-phosphate. Arginine 188 provides a ligand contact to D-glyceraldehyde 3-phosphate. Residues glycine 237 and 258–259 (GS) contribute to the D-ribose 5-phosphate site.

Belongs to the PdxS/SNZ family. In terms of assembly, in the presence of PdxT, forms a dodecamer of heterodimers.

The enzyme catalyses aldehydo-D-ribose 5-phosphate + D-glyceraldehyde 3-phosphate + L-glutamine = pyridoxal 5'-phosphate + L-glutamate + phosphate + 3 H2O + H(+). It participates in cofactor biosynthesis; pyridoxal 5'-phosphate biosynthesis. Catalyzes the formation of pyridoxal 5'-phosphate from ribose 5-phosphate (RBP), glyceraldehyde 3-phosphate (G3P) and ammonia. The ammonia is provided by the PdxT subunit. Can also use ribulose 5-phosphate and dihydroxyacetone phosphate as substrates, resulting from enzyme-catalyzed isomerization of RBP and G3P, respectively. The chain is Pyridoxal 5'-phosphate synthase subunit PdxS from Corynebacterium glutamicum (strain ATCC 13032 / DSM 20300 / JCM 1318 / BCRC 11384 / CCUG 27702 / LMG 3730 / NBRC 12168 / NCIMB 10025 / NRRL B-2784 / 534).